Consider the following 131-residue polypeptide: Profilin-4 (131 aa).

Cysteines 13 and 115 form a disulfide. The Involved in PIP2 interaction motif lies at A81–T97. A Phosphothreonine modification is found at T111.

It belongs to the profilin family. As to quaternary structure, occurs in many kinds of cells as a complex with monomeric actin in a 1:1 ratio. Phosphorylated by MAP kinases.

Its subcellular location is the cytoplasm. It localises to the cytoskeleton. Functionally, binds to actin and affects the structure of the cytoskeleton. At high concentrations, profilin prevents the polymerization of actin, whereas it enhances it at low concentrations. This is Profilin-4 from Olea europaea (Common olive).